A 568-amino-acid polypeptide reads, in one-letter code: ATP-dependent RNA helicase MRH4, mitochondrial (568 aa).

A mitochondrion-targeting transit peptide spans 1 to 50; the sequence is MVSILAIRTFNPLGHFVSTQCVRAYAINSVRAGSKSSSVRAGSKNDTTRA. Polar residues predominate over residues 36–49; sequence SSSVRAGSKNDTTR. Residues 36–64 form a disordered region; that stretch reads SSSVRAGSKNDTTRASSKKNKAGKSKLQL. Residues 143 to 150 carry the Q motif motif; it reads EIHPSPIQ. Positions 160-348 constitute a Helicase ATP-binding domain; it reads NLMEPKLQVH…TKMFPNAIPL (189 aa). 173–180 contacts ATP; that stretch reads AETGSGKT. The short motif at 296–299 is the DEAD box element; sequence DEAD. Residues 379–568 form the Helicase C-terminal domain; sequence ALAQTLYAIA…TILKKNKALT (190 aa).

It belongs to the DEAD box helicase family. MRH4 subfamily.

Its subcellular location is the mitochondrion. It carries out the reaction ATP + H2O = ADP + phosphate + H(+). Its function is as follows. ATP-binding RNA helicase involved in mitochondrial RNA metabolism. Required for maintenance of mitochondrial DNA. This Candida glabrata (strain ATCC 2001 / BCRC 20586 / JCM 3761 / NBRC 0622 / NRRL Y-65 / CBS 138) (Yeast) protein is ATP-dependent RNA helicase MRH4, mitochondrial (MRH4).